Reading from the N-terminus, the 844-residue chain is DNA mismatch repair protein MutS (844 aa).

Residue 602–609 (GPNMSGKS) coordinates ATP.

It belongs to the DNA mismatch repair MutS family.

Functionally, this protein is involved in the repair of mismatches in DNA. It is possible that it carries out the mismatch recognition step. This protein has a weak ATPase activity. This chain is DNA mismatch repair protein MutS, found in Streptococcus pneumoniae (strain Hungary19A-6).